We begin with the raw amino-acid sequence, 395 residues long: MKGSLLLAGATLLGCTSAKLHSLKLKKVSLKEQLEHADIDVQIKSLGQKYMGIRPGQHEQQMFKEQTPIEAESGHNVLIDNFLNAQYFSEISIGTPPQTFKVVLDTGSSNLWVPGKDCSSIACFLHSTYDSSASSTFTRNGTSFAIRYGSGSLEGFVSQDNVQIGDMKIKNQLFAEATSEPGLAFAFGRFDGILGMGYDTISVNKITPPFYKMVEQGLVDEPVFSFYLGDTNKDGDQSVVTFGGADKSHYTGDITTIPLRRKAYWEVEFNAITLGKDTATLDNTGIILDTGTSLIALPTTYAEMIISKSWNGQYTIDCAKRDSLPDLTFTLSGHNFTIGPYDYTLEVSGTCISSFMGMDFPEPVGPLAILGDSFLRRWYSVYDLGKGTVGLAKAK.

The signal sequence occupies residues 1–18; that stretch reads MKGSLLLAGATLLGCTSA. A propeptide spans 19–72 (activation peptide); that stretch reads KLHSLKLKKVSLKEQLEHADIDVQIKSLGQKYMGIRPGQHEQQMFKEQTPIEAE. The Peptidase A1 domain occupies 87-392; it reads YFSEISIGTP…DLGKGTVGLA (306 aa). Residue D105 is part of the active site. C118 and C123 are oxidised to a cystine. An N-linked (GlcNAc...) asparagine glycan is attached at N140. Residue D289 is part of the active site. C318 and C351 are oxidised to a cystine. N-linked (GlcNAc...) asparagine glycosylation occurs at N335.

Belongs to the peptidase A1 family.

The protein resides in the vacuole lumen. The protein localises to the secreted. The enzyme catalyses Hydrolysis of proteins with broad specificity for peptide bonds. Cleaves -Leu-Leu-|-Val-Tyr- bond in a synthetic substrate. Does not act on esters of Tyr or Arg.. Functionally, vacuolar aspartic endopeptidase which is probably also secreted and contributes to virulence. This is Vacuolar protease A (PEP2) from Arthroderma otae (strain ATCC MYA-4605 / CBS 113480) (Microsporum canis).